Reading from the N-terminus, the 413-residue chain is MNRILKQVSNTKGKGIRFYSSSSQLDSEYMFPSVRRLLVEYGINSSKEVTATGPQNRLLKGDVLAYIKTKNLSPVDRLSLIASSVKSSQPSSSSSPSIVDSPTLTSQIKDQIKIVTTITNDKNKSKVIYEDIPNNNIRRVIATKLSQSKQQVPHFYMTVECELDNVLAMRKSMPENVKISVNDFVLRACALALRDNPQANSKWSDEHGEAILNPTVDISFAVSTDRGLITPIITNTDKKQLLAISNESKQLALKARDGKLKPEEFIGGTFSVSNLGMFGITSFNAIINYPQAGILAIGTGRKVLRPPSTYQPIETNLNASYGSEGKSEIINTNGPLTTEQLEKLFDNTVSKKQDIKQQIINEQPQPPKYEQPKVANVMDVTLSGDNRVFDDEIAGKFLSSFKYYLSNPQNMIL.

The N-terminal 19 residues, 1–19 (MNRILKQVSNTKGKGIRFY), are a transit peptide targeting the mitochondrion. Residues 29 to 67 (YMFPSVRRLLVEYGINSSKEVTATGPQNRLLKGDVLAYI) form the Peripheral subunit-binding (PSBD) domain.

Belongs to the 2-oxoacid dehydrogenase family.

It localises to the mitochondrion. In terms of biological role, the pyruvate dehydrogenase complex catalyzes the overall conversion of pyruvate to acetyl-CoA and CO(2). It contains multiple copies of three enzymatic components: pyruvate dehydrogenase (E1), dihydrolipoamide acetyltransferase (E2) and lipoamide dehydrogenase (E3). This is Pyruvate dehydrogenase complex subunit homolog DDB_G0271564, mitochondrial (pdhX) from Dictyostelium discoideum (Social amoeba).